A 156-amino-acid chain; its full sequence is MNLNATFFAQMVVFFILWWVVAKFIWPPLVKALDERAKKIADGLAAAEKGKAELELANKRVDQAMAEARTEGAQRVADAEKRAQLTADEIKQNAQAEAARIIAQAKAEAEQQVTRAREALRDQVAVLAVKGAEQILKREVNAQVHTDLLNQLKAEL.

The helical transmembrane segment at 7 to 27 threads the bilayer; sequence FFAQMVVFFILWWVVAKFIWP.

The protein belongs to the ATPase B chain family. As to quaternary structure, F-type ATPases have 2 components, F(1) - the catalytic core - and F(0) - the membrane proton channel. F(1) has five subunits: alpha(3), beta(3), gamma(1), delta(1), epsilon(1). F(0) has three main subunits: a(1), b(2) and c(10-14). The alpha and beta chains form an alternating ring which encloses part of the gamma chain. F(1) is attached to F(0) by a central stalk formed by the gamma and epsilon chains, while a peripheral stalk is formed by the delta and b chains.

Its subcellular location is the cell inner membrane. F(1)F(0) ATP synthase produces ATP from ADP in the presence of a proton or sodium gradient. F-type ATPases consist of two structural domains, F(1) containing the extramembraneous catalytic core and F(0) containing the membrane proton channel, linked together by a central stalk and a peripheral stalk. During catalysis, ATP synthesis in the catalytic domain of F(1) is coupled via a rotary mechanism of the central stalk subunits to proton translocation. In terms of biological role, component of the F(0) channel, it forms part of the peripheral stalk, linking F(1) to F(0). The polypeptide is ATP synthase subunit b (Cupriavidus necator (strain ATCC 17699 / DSM 428 / KCTC 22496 / NCIMB 10442 / H16 / Stanier 337) (Ralstonia eutropha)).